Reading from the N-terminus, the 707-residue chain is Protein kinase C theta type (707 aa).

Residues 1-107 form the C2 domain; sequence MSPFLRIGLS…KNNGRTEIWL (107 aa). Tyrosine 90 is modified (phosphotyrosine; by LCK). The Phorbol-ester/DAG-type 1 zinc-finger motif lies at 159–209; it reads CHEFTATFFPQPTFCSVCHEFVWGLNKQGYQCRRCNAAIHKKCIDKVIAKC. Threonine 219 is modified (phosphothreonine; by autocatalysis). The Phorbol-ester/DAG-type 2 zinc finger occupies 231 to 281; that stretch reads PHRFKVYNYKSPTFCEHCGTLLWGLARQGLKCDACGMNVHHRCQTKVANLC. Serine 348 carries the post-translational modification Phosphoserine. The Protein kinase domain maps to 380–634; that stretch reads FILHKMLGKG…RGDIRQHPLF (255 aa). ATP contacts are provided by residues 386–394 and lysine 409; that span reads LGKGSFGKV. The active-site Proton acceptor is the aspartate 504. A Phosphothreonine; by PDPK1 modification is found at threonine 538. Residues 635 to 706 form the AGC-kinase C-terminal domain; sequence REINWEELER…INPGMETLIC (72 aa). A phosphoserine mark is found at serine 676 and serine 685. Residue serine 695 is modified to Phosphoserine; by autocatalysis.

This sequence belongs to the protein kinase superfamily. AGC Ser/Thr protein kinase family. PKC subfamily. Part of a membrane raft complex composed at least of BCL10, CARD11, MALT1 and IKBKB. Interacts with GLRX3 (via N-terminus). Interacts with ECT2. Interacts with CCDC88A/GIV; the interaction leads to phosphorylation of CCDC88A and inhibition of its guanine nucleotide exchange factor activity. Interacts with CD28. It depends on Mg(2+) as a cofactor. In terms of processing, autophosphorylation at Thr-219 is required for targeting to the TCR and cellular function of PRKCQ upon antigen receptor ligation. Following TCR stimulation, phosphorylated at Tyr-90 and Ser-685.

It localises to the cytoplasm. The protein resides in the cell membrane. The catalysed reaction is L-seryl-[protein] + ATP = O-phospho-L-seryl-[protein] + ADP + H(+). It catalyses the reaction L-threonyl-[protein] + ATP = O-phospho-L-threonyl-[protein] + ADP + H(+). Its activity is regulated as follows. Novel PKCs (PRKCD, PRKCE, PRKCH and PRKCQ) are calcium-insensitive, but activated by diacylglycerol (DAG) and phosphatidylserine. Three specific sites; Thr-538 (activation loop of the kinase domain), Ser-676 (turn motif) and Ser-695 (hydrophobic region), need to be phosphorylated for its full activation. In terms of biological role, calcium-independent, phospholipid- and diacylglycerol (DAG)-dependent serine/threonine-protein kinase that mediates non-redundant functions in T-cell receptor (TCR) signaling, including T-cells activation, proliferation, differentiation and survival, by mediating activation of multiple transcription factors such as NF-kappa-B, JUN, NFATC1 and NFATC2. In TCR-CD3/CD28-co-stimulated T-cells, is required for the activation of NF-kappa-B and JUN, which in turn are essential for IL2 production, and participates in the calcium-dependent NFATC1 and NFATC2 transactivation. Mediates the activation of the canonical NF-kappa-B pathway (NFKB1) by direct phosphorylation of CARD11 on several serine residues, inducing CARD11 association with lipid rafts and recruitment of the BCL10-MALT1 complex, which then activates IKK complex, resulting in nuclear translocation and activation of NFKB1. May also play an indirect role in activation of the non-canonical NF-kappa-B (NFKB2) pathway. In the signaling pathway leading to JUN activation, acts by phosphorylating the mediator STK39/SPAK and may not act through MAP kinases signaling. Plays a critical role in TCR/CD28-induced NFATC1 and NFATC2 transactivation by participating in the regulation of reduced inositol 1,4,5-trisphosphate generation and intracellular calcium mobilization. After costimulation of T-cells through CD28 can phosphorylate CBLB and is required for the ubiquitination and subsequent degradation of CBLB, which is a prerequisite for the activation of TCR. During T-cells differentiation, plays an important role in the development of T-helper 2 (Th2) cells following immune and inflammatory responses, and, in the development of inflammatory autoimmune diseases, is necessary for the activation of IL17-producing Th17 cells. May play a minor role in Th1 response. Upon TCR stimulation, mediates T-cell protective survival signal by phosphorylating BAD, thus protecting T-cells from BAD-induced apoptosis, and by up-regulating BCL-X(L)/BCL2L1 levels through NF-kappa-B and JUN pathways. In platelets, regulates signal transduction downstream of the ITGA2B, CD36/GP4, F2R/PAR1 and F2RL3/PAR4 receptors, playing a positive role in 'outside-in' signaling and granule secretion signal transduction. May relay signals from the activated ITGA2B receptor by regulating the uncoupling of WASP and WIPF1, thereby permitting the regulation of actin filament nucleation and branching activity of the Arp2/3 complex. May mediate inhibitory effects of free fatty acids on insulin signaling by phosphorylating IRS1, which in turn blocks IRS1 tyrosine phosphorylation and downstream activation of the PI3K/AKT pathway. Phosphorylates MSN (moesin) in the presence of phosphatidylglycerol or phosphatidylinositol. Phosphorylates PDPK1 at 'Ser-504' and 'Ser-532' and negatively regulates its ability to phosphorylate PKB/AKT1. Phosphorylates CCDC88A/GIV and inhibits its guanine nucleotide exchange factor activity. Phosphorylates and activates LRRK1, which phosphorylates RAB proteins involved in intracellular trafficking. The chain is Protein kinase C theta type (Prkcq) from Rattus norvegicus (Rat).